Reading from the N-terminus, the 251-residue chain is Ubiquinone/menaquinone biosynthesis C-methyltransferase UbiE (251 aa).

S-adenosyl-L-methionine-binding positions include threonine 74, aspartate 95, and 123-124; that span reads NA.

This sequence belongs to the class I-like SAM-binding methyltransferase superfamily. MenG/UbiE family.

It catalyses the reaction a 2-demethylmenaquinol + S-adenosyl-L-methionine = a menaquinol + S-adenosyl-L-homocysteine + H(+). It carries out the reaction a 2-methoxy-6-(all-trans-polyprenyl)benzene-1,4-diol + S-adenosyl-L-methionine = a 5-methoxy-2-methyl-3-(all-trans-polyprenyl)benzene-1,4-diol + S-adenosyl-L-homocysteine + H(+). It functions in the pathway quinol/quinone metabolism; menaquinone biosynthesis; menaquinol from 1,4-dihydroxy-2-naphthoate: step 2/2. It participates in cofactor biosynthesis; ubiquinone biosynthesis. Its function is as follows. Methyltransferase required for the conversion of demethylmenaquinol (DMKH2) to menaquinol (MKH2) and the conversion of 2-polyprenyl-6-methoxy-1,4-benzoquinol (DDMQH2) to 2-polyprenyl-3-methyl-6-methoxy-1,4-benzoquinol (DMQH2). In Marinomonas sp. (strain MWYL1), this protein is Ubiquinone/menaquinone biosynthesis C-methyltransferase UbiE.